The primary structure comprises 86 residues: Small ribosomal subunit protein bS20 (86 aa).

Residues 1-11 (MANIKSQIKRN) are compositionally biased toward polar residues. The segment at 1–20 (MANIKSQIKRNLTNEKRHQA) is disordered.

This sequence belongs to the bacterial ribosomal protein bS20 family.

Functionally, binds directly to 16S ribosomal RNA. The sequence is that of Small ribosomal subunit protein bS20 from Acholeplasma laidlawii (strain PG-8A).